Reading from the N-terminus, the 169-residue chain is CKLF-like MARVEL transmembrane domain-containing protein 1 (169 aa).

The region spanning 17-135 (NLKQPETAAA…DAFVVTTKMR (119 aa)) is the MARVEL domain. The next 4 helical transmembrane spans lie at 22 to 42 (ETAA…ITQA), 46 to 66 (FITI…IYVL), 79 to 99 (LLDL…AILA), and 110 to 130 (YVGG…AFVV).

It belongs to the chemokine-like factor family. As to expression, highly expressed in testis.

Its subcellular location is the membrane. This is CKLF-like MARVEL transmembrane domain-containing protein 1 (CMTM1) from Homo sapiens (Human).